Here is a 211-residue protein sequence, read N- to C-terminus: Redox-sensing transcriptional repressor Rex (211 aa).

Residues 17–56 (LYYRFVSILKGKGIDRVNSKTISEALQIDSATIRRDFSYF) constitute a DNA-binding region (H-T-H motif). An NAD(+)-binding site is contributed by 91–96 (GIGNLG).

The protein belongs to the transcriptional regulatory Rex family. In terms of assembly, homodimer.

The protein resides in the cytoplasm. Its function is as follows. Modulates transcription in response to changes in cellular NADH/NAD(+) redox state. The polypeptide is Redox-sensing transcriptional repressor Rex (Staphylococcus epidermidis (strain ATCC 35984 / DSM 28319 / BCRC 17069 / CCUG 31568 / BM 3577 / RP62A)).